Consider the following 435-residue polypeptide: Elongation factor 1-alpha (435 aa).

Residues 4–227 (KPHLNLIVIG…YLDQLELPPK (224 aa)) form the tr-type G domain. A G1 region spans residues 13–20 (GHIDHGKS). GTP is bound at residue 13–20 (GHIDHGKS). Residue serine 20 participates in Mg(2+) binding. The segment at 69-73 (GVTIN) is G2. The interval 90 to 93 (DAPG) is G3. GTP contacts are provided by residues 90-94 (DAPGH) and 152-155 (NKMD). The segment at 152-155 (NKMD) is G4. The interval 193–195 (VAP) is G5.

It belongs to the TRAFAC class translation factor GTPase superfamily. Classic translation factor GTPase family. EF-Tu/EF-1A subfamily.

Its subcellular location is the cytoplasm. It carries out the reaction GTP + H2O = GDP + phosphate + H(+). Its function is as follows. GTP hydrolase that promotes the GTP-dependent binding of aminoacyl-tRNA to the A-site of ribosomes during protein biosynthesis. The polypeptide is Elongation factor 1-alpha (Saccharolobus solfataricus (strain ATCC 35092 / DSM 1617 / JCM 11322 / P2) (Sulfolobus solfataricus)).